The sequence spans 265 residues: TATA-box-binding protein (265 aa).

A disordered region spans residues 1–40 (MYNPSQAVPVSLHKNQDNQDGGQQRSHYPQISSQQSQSYL). A compositionally biased stretch (polar residues) spans 18–29 (NQDGGQQRSHYP). Tandem repeats lie at residues 91-167 (LQNI…ARVV) and 181-258 (IQNM…YPIL).

The protein belongs to the TBP family. In terms of assembly, belongs to the TFIID complex together with the TBP-associated factors (TAFs). Binds DNA as monomer.

It is found in the nucleus. Functionally, general transcription factor that functions at the core of the DNA-binding multiprotein factor TFIID. Binding of TFIID to the TATA box is the initial transcriptional step of the pre-initiation complex (PIC), playing a role in the activation of eukaryotic genes transcribed by RNA polymerase II. The chain is TATA-box-binding protein from Strongylocentrotus purpuratus (Purple sea urchin).